Here is a 185-residue protein sequence, read N- to C-terminus: Large ribosomal subunit protein uL6 (185 aa).

The protein belongs to the universal ribosomal protein uL6 family. In terms of assembly, part of the 50S ribosomal subunit.

Its function is as follows. This protein binds to the 23S rRNA, and is important in its secondary structure. It is located near the subunit interface in the base of the L7/L12 stalk, and near the tRNA binding site of the peptidyltransferase center. The sequence is that of Large ribosomal subunit protein uL6 from Deinococcus deserti (strain DSM 17065 / CIP 109153 / LMG 22923 / VCD115).